A 578-amino-acid chain; its full sequence is Arginine--tRNA ligase (578 aa).

A 'HIGH' region motif is present at residues 127–137 (PNLAKEMHVGH).

It belongs to the class-I aminoacyl-tRNA synthetase family. Monomer.

It localises to the cytoplasm. The catalysed reaction is tRNA(Arg) + L-arginine + ATP = L-arginyl-tRNA(Arg) + AMP + diphosphate. The chain is Arginine--tRNA ligase from Pseudomonas putida (strain ATCC 700007 / DSM 6899 / JCM 31910 / BCRC 17059 / LMG 24140 / F1).